The sequence spans 150 residues: MSDYKIWVDADACPNPIKEILFRAAERKALPLVLVANQMIRVPPSPYINQIRVGAGFDVADQYIVDHVEPTHLVITADIPLAALIIEKGALALNPRGELYTVDNIKQKLTMRDFMEDLRGSGVHTGGPDSFSQADKQAFANSLDKWLVRV.

The protein belongs to the UPF0178 family.

The chain is UPF0178 protein Sbal_1771 from Shewanella baltica (strain OS155 / ATCC BAA-1091).